A 930-amino-acid polypeptide reads, in one-letter code: A disintegrin and metalloproteinase with thrombospondin motifs 5 (930 aa).

Positions 1–16 (MLLGWASLLLCAFRLP) are cleaved as a signal peptide. Positions 17–261 (LAAVGPAATP…PQTWWRRRRR (245 aa)) are excised as a propeptide. Disordered stretches follow at residues 24 to 69 (ATPA…QRRR) and 206 to 231 (RASCETPASTPEAHEHAPAHSNPSGR). Over residues 31–42 (AGQPPTAAAAAQ) the composition is skewed to low complexity. Residues 46–59 (RQGEEVQERAEPPG) are compositionally biased toward basic and acidic residues. A Cysteine switch motif is present at residues 207 to 214 (ASCETPAS). Residue Cys209 coordinates Zn(2+). The 210-residue stretch at 267-476 (RQVELLLVAD…GHGNCLLDLP (210 aa)) folds into the Peptidase M12B domain. Disulfide bonds link Cys342-Cys394, Cys371-Cys376, Cys388-Cys471, Cys426-Cys455, Cys497-Cys519, Cys508-Cys529, Cys514-Cys548, and Cys542-Cys553. His410 is a Zn(2+) binding site. Glu411 is an active-site residue. Zn(2+) contacts are provided by His414 and His420. The 82-residue stretch at 485-566 (ELPGQTYDAT…TKKKYYSTSS (82 aa)) folds into the Disintegrin domain. Asn498 is a glycosylation site (N-linked (GlcNAc...) asparagine). The region spanning 567-622 (HGNWGSWGSWGQCSRSCGGGVQFAYRHCNNPAPRNNGRYCTGKRAIYRSCSLMPCP) is the TSP type-1 1 domain. Residues Trp570 and Trp573 are each glycosylated (C-linked (Man) tryptophan). Intrachain disulfides connect Cys579–Cys616, Cys583–Cys621, and Cys594–Cys606. Residue Ser582 is glycosylated (O-linked (Fuc...) serine). Residues Asn728, Asn802, and Asn807 are each glycosylated (N-linked (GlcNAc...) asparagine). The tract at residues 732–874 (TKIVGTFNKK…HGSNKVGSHT (143 aa)) is spacer. The TSP type-1 2 domain occupies 875–929 (SQPQWVTGPWLACSRTCDTGWHTRTVQCQDGNRKLAKGCPLSQRPSAFKQCLLKK).

Requires Zn(2+) as cofactor. In terms of processing, the precursor is cleaved by furin and PCSK7 outside of the cell. Post-translationally, glycosylated. Can be O-fucosylated by POFUT2 on a serine or a threonine residue found within the consensus sequence C1-X(2)-(S/T)-C2-G of the TSP type-1 repeat domains where C1 and C2 are the first and second cysteine residue of the repeat, respectively. Fucosylated repeats can then be further glycosylated by the addition of a beta-1,3-glucose residue by the glucosyltransferase, B3GALTL. Fucosylation mediates the efficient secretion of ADAMTS family members. Can also be C-glycosylated with one or two mannose molecules on tryptophan residues within the consensus sequence W-X-X-W of the TPRs, and N-glycosylated. These other glycosylations can also facilitate secretion. In terms of tissue distribution, expressed at low level in placenta primarily but also detected in heart and brain, cervix, uterus, bladder, esophagus, rib cartilage, chondroblastoma, fibrous tissue and a joint capsule from an arthritic patient.

It localises to the secreted. The protein resides in the extracellular space. Its subcellular location is the extracellular matrix. Its function is as follows. Metalloproteinase that plays an important role in connective tissue organization, development, inflammation and cell migration. Extracellular matrix (ECM) degrading enzyme that show proteolytic activity toward the hyalectan group of chondroitin sulfate proteoglycans (CSPGs) including ACAN, VCAN, BCAN and NCAN. Cleavage within the hyalectans occurs at Glu-Xaa recognition motifs. Plays a role in embryonic development, including limb and cardiac morphogenesis, and skeletal muscle development through its VCAN remodeling properties. Cleaves VCAN in the pericellular matrix surrounding myoblasts, facilitating myoblast contact and fusion which is required for skeletal muscle development and regeneration. Participates in development of brown adipose tissue and browning of white adipose tissue. Plays an important role for T-lymphocyte migration from draining lymph nodes following viral infection. The protein is A disintegrin and metalloproteinase with thrombospondin motifs 5 (ADAMTS5) of Homo sapiens (Human).